Here is a 239-residue protein sequence, read N- to C-terminus: LexA repressor (239 aa).

The segment at residues 26–46 (FDEMKDALDLASKSGIHRLIT) is a DNA-binding region (H-T-H motif). A disordered region spans residues 80–108 (RRGFSPSVIEGSLGKPQPAAAPAPAKPVA). Residues Ser159 and Lys197 each act as for autocatalytic cleavage activity in the active site.

The protein belongs to the peptidase S24 family. In terms of assembly, homodimer.

The enzyme catalyses Hydrolysis of Ala-|-Gly bond in repressor LexA.. Represses a number of genes involved in the response to DNA damage (SOS response), including recA and lexA. In the presence of single-stranded DNA, RecA interacts with LexA causing an autocatalytic cleavage which disrupts the DNA-binding part of LexA, leading to derepression of the SOS regulon and eventually DNA repair. In Rhizobium leguminosarum bv. trifolii (strain WSM2304), this protein is LexA repressor.